Here is a 37-residue protein sequence, read N- to C-terminus: Large ribosomal subunit protein bL36 (37 aa).

It belongs to the bacterial ribosomal protein bL36 family.

The polypeptide is Large ribosomal subunit protein bL36 (Acetivibrio thermocellus (strain ATCC 27405 / DSM 1237 / JCM 9322 / NBRC 103400 / NCIMB 10682 / NRRL B-4536 / VPI 7372) (Clostridium thermocellum)).